The following is a 257-amino-acid chain: UPF0246 protein Ping_3037 (257 aa).

The protein belongs to the UPF0246 family.

The sequence is that of UPF0246 protein Ping_3037 from Psychromonas ingrahamii (strain DSM 17664 / CCUG 51855 / 37).